A 642-amino-acid chain; its full sequence is Threonine--tRNA ligase (642 aa).

The 61-residue stretch at methionine 1–threonine 61 folds into the TGS domain. Residues aspartate 243–proline 534 form a catalytic region. Residues cysteine 334, histidine 385, and histidine 511 each contribute to the Zn(2+) site.

Belongs to the class-II aminoacyl-tRNA synthetase family. In terms of assembly, homodimer. The cofactor is Zn(2+).

It localises to the cytoplasm. The enzyme catalyses tRNA(Thr) + L-threonine + ATP = L-threonyl-tRNA(Thr) + AMP + diphosphate + H(+). Functionally, catalyzes the attachment of threonine to tRNA(Thr) in a two-step reaction: L-threonine is first activated by ATP to form Thr-AMP and then transferred to the acceptor end of tRNA(Thr). Also edits incorrectly charged L-seryl-tRNA(Thr). This is Threonine--tRNA ligase from Shewanella woodyi (strain ATCC 51908 / MS32).